Reading from the N-terminus, the 814-residue chain is Rho GTPase-activating protein 44 (814 aa).

Positions 14 to 249 constitute a BAR domain; the sequence is QTVGRAEKTE…IKAQQEAWVE (236 aa). The Rho-GAP domain maps to 255–445; the sequence is KPLEEHLMIS…PIIQHADWFF (191 aa). 3 disordered regions span residues 467-493, 528-769, and 784-814; these read ANYS…RPLS, RGSS…MSTD, and STLR…STAL. Over residues 479 to 489 the composition is skewed to basic and acidic residues; it reads PADRRQPEQAR. Phosphoserine is present on Ser-493. 5 stretches are compositionally biased toward low complexity: residues 567–581, 598–612, 622–637, 684–704, and 741–752; these read SPAT…SGAS, SPGS…SIQG, PQPA…DQSP, SPYG…LSPA, and SVSLSASSPQST. The tract at residues 727–814 is interaction with BST2; the sequence is KPRQRPTLPP…SEEESESTAL (88 aa). Over residues 790–805 the composition is skewed to basic and acidic residues; the sequence is PLEHARRHSATDKRDS. Position 805 is a phosphoserine (Ser-805). Positions 811-814 match the PDZ-binding motif; that stretch reads STAL.

Interacts with BST2 (via cytoplasmic domain). Interacts (probably via PDZ-binding motif) with SHANK3 (via PDZ domain); the interaction takes place in dendritic spines and promotes GRIA1 exocytosis. Specifically expressed in brain (at protein level). Detected in olfactory bulb, cortex, hippocampus, diencephalon and cerebellum (at protein level). Expressed in hippocampal neurons (at protein level).

The protein resides in the cell projection. It localises to the dendritic spine. Its subcellular location is the recycling endosome. It is found in the presynapse. The protein localises to the dendrite. Functionally, GTPase-activating protein (GAP) that stimulates the GTPase activity of Rho-type GTPases. Thereby, controls Rho-type GTPases cycling between their active GTP-bound and inactive GDP-bound states. Acts as a GAP at least for CDC42 and RAC1. In neurons, is involved in dendritic spine formation and synaptic plasticity in a specific RAC1-GAP activity. Limits the initiation of exploratory dendritic filopodia. Recruited to actin-patches that seed filopodia, binds specifically to plasma membrane sections that are deformed inward by acto-myosin mediated contractile forces. Acts through GAP activity on RAC1 to reduce actin polymerization necessary for filopodia formation. In association with SHANK3, promotes GRIA1 exocytosis from recycling endosomes and spine morphological changes associated to long-term potentiation. This is Rho GTPase-activating protein 44 from Mus musculus (Mouse).